A 361-amino-acid polypeptide reads, in one-letter code: Fructose-1,6-bisphosphatase class 1 2 (361 aa).

Residues Glu-110, Asp-134, Leu-136, and Asp-137 each coordinate Mg(2+). Substrate is bound by residues 137–140 (DGSS), Asn-231, Tyr-264, and Lys-294. Glu-300 serves as a coordination point for Mg(2+).

The protein belongs to the FBPase class 1 family. Homotetramer. Requires Mg(2+) as cofactor.

Its subcellular location is the cytoplasm. The catalysed reaction is beta-D-fructose 1,6-bisphosphate + H2O = beta-D-fructose 6-phosphate + phosphate. It functions in the pathway carbohydrate biosynthesis; gluconeogenesis. This is Fructose-1,6-bisphosphatase class 1 2 from Salinibacter ruber (strain DSM 13855 / M31).